The following is a 633-amino-acid chain: ATP-dependent clpX-like chaperone, mitochondrial (633 aa).

The N-terminal 56 residues, 1 to 56 (MPSCGACTCGAAAVRLITSSLASAQRGISGGRIHMSVLGRLGTFETQILQRAPLRS), are a transit peptide targeting the mitochondrion. Positions 68–100 (DGISKDGSGDGNKKSASEGSSKKSGSGNSGKGG) are disordered. Residues 69 to 83 (GISKDGSGDGNKKSA) are compositionally biased toward basic and acidic residues. A compositionally biased stretch (low complexity) spans 84-93 (SEGSSKKSGS). One can recognise a ClpX-type ZB domain in the interval 93–146 (SGNSGKGGNQLRCPKCGDLCTHVETFVSSTRFVKCEKCHHFFVVLSEADSKKSI). 4 residues coordinate Zn(2+): C105, C108, C127, and C130. ATP is bound at residue 294–301 (PTGSGKTL). N6-acetyllysine is present on K437. Over residues 598-610 (KEPGYIRAPTKES) the composition is skewed to basic and acidic residues. Residues 598–633 (KEPGYIRAPTKESSEEEYDSGVEEEGWPRQADAANS) form a disordered region. Positions 611–622 (SEEEYDSGVEEE) are enriched in acidic residues. The residue at position 617 (S617) is a Phosphoserine.

This sequence belongs to the ClpX chaperone family. Homohexamer that forms a ring structure; this hexamerization requires ATP binding. Component of the ClpXP complex formed by the assembly of two CLPP heptameric rings with two CLPX hexameric rings, giving rise to a symmetrical structure with two central CLPP rings flanked by a CLPX ring at either end of the complex. Interacts with TFAM. As to expression, higher expression in skeletal muscle and heart and to a lesser extent in liver, brain, placenta, lung, kidney and pancreas.

The protein localises to the mitochondrion. It is found in the mitochondrion matrix. The protein resides in the mitochondrion nucleoid. The enzyme catalyses ATP + H2O = ADP + phosphate + H(+). Its function is as follows. ATP-dependent chaperone that functions as an unfoldase. As part of the ClpXP protease complex, it recognizes specific protein substrates, unfolds them using energy derived from ATP hydrolysis, and then translocates them to the proteolytic subunit (CLPP) of the ClpXP complex for degradation. Thanks to its chaperone activity, it also functions in the incorporation of the pyridoxal phosphate cofactor into 5-aminolevulinate synthase, thereby activating 5-aminolevulinate (ALA) synthesis, the first step in heme biosynthesis. This chaperone is also involved in the control of mtDNA nucleoid distribution, by regulating mitochondrial transcription factor A (TFAM) activity. The protein is ATP-dependent clpX-like chaperone, mitochondrial of Homo sapiens (Human).